The chain runs to 394 residues: Elongation factor Tu 2 (394 aa).

In terms of domain architecture, tr-type G spans 10 to 204 (KPHVNVGTIG…ALDTYIPEPA (195 aa)). The interval 19 to 26 (GHVDHGKT) is G1. Position 19 to 26 (19 to 26 (GHVDHGKT)) interacts with GTP. Thr26 is a binding site for Mg(2+). The interval 60–64 (GITIN) is G2. Residues 81-84 (DCPG) form a G3 region. GTP is bound by residues 81–85 (DCPGH) and 136–139 (NKCD). The segment at 136–139 (NKCD) is G4. Residues 174–176 (SAL) are G5.

This sequence belongs to the TRAFAC class translation factor GTPase superfamily. Classic translation factor GTPase family. EF-Tu/EF-1A subfamily. In terms of assembly, monomer.

Its subcellular location is the cytoplasm. The catalysed reaction is GTP + H2O = GDP + phosphate + H(+). In terms of biological role, GTP hydrolase that promotes the GTP-dependent binding of aminoacyl-tRNA to the A-site of ribosomes during protein biosynthesis. The chain is Elongation factor Tu 2 from Shewanella frigidimarina (strain NCIMB 400).